Reading from the N-terminus, the 593-residue chain is UvrABC system protein C (593 aa).

In terms of domain architecture, GIY-YIG spans 17–94 (MEPGCYLMKD…IKQYQPRYNI (78 aa)). The 36-residue stretch at 199-234 (KTILKSLEERMLTASESLDFERAKEYRDLIQHIQNL) folds into the UVR domain.

Belongs to the UvrC family. Interacts with UvrB in an incision complex.

The protein localises to the cytoplasm. Its function is as follows. The UvrABC repair system catalyzes the recognition and processing of DNA lesions. UvrC both incises the 5' and 3' sides of the lesion. The N-terminal half is responsible for the 3' incision and the C-terminal half is responsible for the 5' incision. This Staphylococcus aureus (strain bovine RF122 / ET3-1) protein is UvrABC system protein C.